Consider the following 417-residue polypeptide: MTGTLPTQFKDSDLSPLTRPNTLGRFGKYGGQYVPETLIPALIELEQAAKEAWKDSSFNSELNHLLKTYVGRSTPLYEATRLTEHYRKNTLKGPRIWLKREDLNHTGAHKINNALGQALLAIRMGKKRIIAETGAGQHGVATATVCARFGLECIIYMGKEDMRRQALNVFRMQLLGASVRPVTSGTATLKDATSEAIRDWVTNVETTHYILGSVAGPHPYPMLVRDFHAVIGEETKQQCKQAFGRSPDVLLACVGGGSNAMGLFHSFVEDKSVRMIGVEAAGDGVETGRHAATITEGRIGVLHGAMSLLLQDKDGQVEEAHSISAGLDYPGVGPEHSYLKEIGRAEYAAVTDTEAIEALQLVSKLEGIIPALETAHAFAYLEKLCPTLNHNSEIVINCSGRGDKDVNTVAEKLGSEI.

K110 bears the N6-(pyridoxal phosphate)lysine mark.

This sequence belongs to the TrpB family. As to quaternary structure, tetramer of two alpha and two beta chains. Pyridoxal 5'-phosphate serves as cofactor.

The enzyme catalyses (1S,2R)-1-C-(indol-3-yl)glycerol 3-phosphate + L-serine = D-glyceraldehyde 3-phosphate + L-tryptophan + H2O. Its pathway is amino-acid biosynthesis; L-tryptophan biosynthesis; L-tryptophan from chorismate: step 5/5. In terms of biological role, the beta subunit is responsible for the synthesis of L-tryptophan from indole and L-serine. This is Tryptophan synthase beta chain from Prochlorococcus marinus (strain NATL2A).